The primary structure comprises 139 residues: Protein FAM237B (139 aa).

Positions 1 to 24 are cleaved as a signal peptide; the sequence is MCFATRRWFYLHLGCMMLINLVNA. M112 is subject to Methionine amide. The propeptide at 113 to 139 is removed in the mature form; sequence GRRQVMPPKYNFPQKITGGNLNVYLRE.

Post-translationally, the active form requires C-terminal amidation and disulfide bond formation.

The protein resides in the secreted. Functionally, may be capable of activating GPR83 via the GNAQ signaling pathway. This Homo sapiens (Human) protein is Protein FAM237B.